A 290-amino-acid chain; its full sequence is Sodium/potassium-transporting ATPase subunit beta-2 (290 aa).

Residues 1–39 lie on the Cytoplasmic side of the membrane; the sequence is MVIQKEKKSCGQVVEEWKEFVWNPRTHQFMGRTGTSWAF. A helical; Signal-anchor for type II membrane protein membrane pass occupies residues 40–67; sequence ILLFYLVFYGFLTAMFTLTMWVMLQTVS. Topologically, residues 68-290 are extracellular; it reads DHTPKYQDRL…VAFKLRINKT (223 aa). Residues N96 and N118 are each glycosylated (N-linked (GlcNAc...) asparagine). C129 and C150 are oxidised to a cystine. N153 and N159 each carry an N-linked (GlcNAc...) asparagine glycan. Residues C160 and C177 are joined by a disulfide bond. 3 N-linked (GlcNAc...) asparagine glycosylation sites follow: N193, N197, and N238. The segment at 193–290 is immunoglobulin-like; that stretch reads NQSMNVTCAG…VAFKLRINKT (98 aa). C200 and C261 are joined by a disulfide.

Belongs to the X(+)/potassium ATPases subunit beta family. The sodium/potassium-transporting ATPase is composed of a catalytic alpha subunit, an auxiliary non-catalytic beta subunit and an additional regulatory subunit. Interacts with isoform 2 of BSG.

The protein localises to the cell membrane. Its function is as follows. This is the non-catalytic component of the active enzyme, which catalyzes the hydrolysis of ATP coupled with the exchange of Na(+) and K(+) ions across the plasma membrane. The exact function of the beta-2 subunit is not known. In terms of biological role, mediates cell adhesion of neurons and astrocytes, and promotes neurite outgrowth. The protein is Sodium/potassium-transporting ATPase subunit beta-2 (ATP1B2) of Homo sapiens (Human).